The primary structure comprises 453 residues: D-aminoacyl-tRNA deacylase (453 aa).

Positions 428–453 are disordered; the sequence is VRADVALHERPRERVRRPSDDEGKGN.

This sequence belongs to the DtdA deacylase family. Monomer. Zn(2+) is required as a cofactor.

The catalysed reaction is a D-aminoacyl-tRNA + H2O = a tRNA + a D-alpha-amino acid + H(+). It carries out the reaction glycyl-tRNA(Ala) + H2O = tRNA(Ala) + glycine + H(+). D-aminoacyl-tRNA deacylase with broad substrate specificity. By recycling D-aminoacyl-tRNA to D-amino acids and free tRNA molecules, this enzyme counteracts the toxicity associated with the formation of D-aminoacyl-tRNA entities in vivo. The chain is D-aminoacyl-tRNA deacylase from Halobacterium salinarum (strain ATCC 29341 / DSM 671 / R1).